Consider the following 152-residue polypeptide: Ribosome maturation factor RimP (152 aa).

Belongs to the RimP family.

The protein resides in the cytoplasm. Functionally, required for maturation of 30S ribosomal subunits. This is Ribosome maturation factor RimP from Porphyromonas gingivalis (strain ATCC 33277 / DSM 20709 / CIP 103683 / JCM 12257 / NCTC 11834 / 2561).